A 536-amino-acid polypeptide reads, in one-letter code: Heat shock factor protein 2 (536 aa).

Glycyl lysine isopeptide (Lys-Gly) (interchain with G-Cter in SUMO2) cross-links involve residues K2 and K82. The DNA-binding element occupies 7–112 (VPAFLSKLWT…LLENIKRKVS (106 aa)). The Nuclear localization signal motif lies at 108–122 (KRKVSSSKPEENKIR). Positions 119–192 (NKIRQEDLTK…VTLVQNNQLV (74 aa)) are hydrophobic repeat HR-A/B. Residues K135, K139, K151, K210, K218, and K237 each participate in a glycyl lysine isopeptide (Lys-Gly) (interchain with G-Cter in SUMO2) cross-link. The Nuclear localization signal motif lies at 195 to 210 (KRKRPLLLNTNGAQKK). Residues 300-337 (QSGEQNEPARESLSSGSDGSSPLMSSAVQLNGSSSLTS) are disordered. Over residues 311-325 (SLSSGSDGSSPLMSS) the composition is skewed to low complexity. The segment covering 326–337 (AVQLNGSSSLTS) has biased composition (polar residues). Residues 360–385 (LLDYLDSIDCSLEDFQAMLSGRQFSI) form a hydrophobic repeat HR-C region. The tract at residues 407-438 (NNTKSENKGLETTKNNVVQPVSEEGRKSKSKP) is disordered. Basic and acidic residues predominate over residues 429 to 438 (EEGRKSKSKP).

The protein belongs to the HSF family. DNA-binding homotrimer in stressed or heat shocked cells, otherwise found as a homodimer.

The protein localises to the cytoplasm. It is found in the nucleus. Functionally, DNA-binding protein that specifically binds heat shock promoter elements (HSE) and activates transcription. In higher eukaryotes, HSF is unable to bind to the HSE unless the cells are heat shocked. The chain is Heat shock factor protein 2 (HSF2) from Homo sapiens (Human).